The following is a 247-amino-acid chain: Probable transcriptional regulatory protein ABO_0750 (247 aa).

This sequence belongs to the TACO1 family.

It is found in the cytoplasm. In Alcanivorax borkumensis (strain ATCC 700651 / DSM 11573 / NCIMB 13689 / SK2), this protein is Probable transcriptional regulatory protein ABO_0750.